The following is a 255-amino-acid chain: Flagellar brake protein YcgR (255 aa).

Positions 122-240 (QRRTYFRINT…ERDLQQVIFE (119 aa)) constitute a PilZ domain.

It belongs to the YcgR family. In terms of assembly, monomer. Interacts with the flagellar basal bodies.

The protein localises to the bacterial flagellum basal body. Acts as a flagellar brake, regulating swimming and swarming in a bis-(3'-5') cyclic diguanylic acid (c-di-GMP)-dependent manner. Binds 1 c-di-GMP dimer per subunit. Increasing levels of c-di-GMP lead to decreased motility. The protein is Flagellar brake protein YcgR of Pectobacterium carotovorum subsp. carotovorum (strain PC1).